The following is a 177-amino-acid chain: MADFNQILTTGDVDGGIINVVNEIPAGSNHKIEWNRKLAAFQLDRVEPAIFAKPTNYGFIPQTLDEDGDELDVLLVTEQPLATGVFLEARVIGVMKFVDDGEVDDKIVCVPADDRNNGNAYKTLADLPQQLIKQIEFHFNHYKDLKKAGTTKVESWGDAEEAKKVIKESIERWNKQA.

The substrate site is built by Lys-31, Arg-45, and Tyr-57. Residues Asp-67, Asp-72, and Asp-104 each contribute to the Mg(2+) site. Residue Tyr-142 coordinates substrate.

Belongs to the PPase family. In terms of assembly, homohexamer. It depends on Mg(2+) as a cofactor.

The protein localises to the cytoplasm. It catalyses the reaction diphosphate + H2O = 2 phosphate + H(+). Its function is as follows. Catalyzes the hydrolysis of inorganic pyrophosphate (PPi) forming two phosphate ions. The chain is Inorganic pyrophosphatase from Neisseria meningitidis serogroup A / serotype 4A (strain DSM 15465 / Z2491).